The sequence spans 251 residues: Malonyl-[acyl-carrier protein] O-methyltransferase (251 aa).

This sequence belongs to the methyltransferase superfamily.

It catalyses the reaction malonyl-[ACP] + S-adenosyl-L-methionine = malonyl-[ACP] methyl ester + S-adenosyl-L-homocysteine. Its pathway is cofactor biosynthesis; biotin biosynthesis. Converts the free carboxyl group of a malonyl-thioester to its methyl ester by transfer of a methyl group from S-adenosyl-L-methionine (SAM). It allows to synthesize pimeloyl-ACP via the fatty acid synthetic pathway. The polypeptide is Malonyl-[acyl-carrier protein] O-methyltransferase (Pseudescherichia vulneris (Escherichia vulneris)).